A 375-amino-acid polypeptide reads, in one-letter code: Serpin B5 (375 aa).

3 N-linked (GlcNAc...) asparagine glycosylation sites follow: Asn133, Asn298, and Asn361.

Belongs to the serpin family. Ov-serpin subfamily. As to quaternary structure, interacts with IRF6.

It is found in the secreted. It localises to the extracellular space. Tumor suppressor. It blocks the growth, invasion, and metastatic properties of mammary tumors. As it does not undergo the S (stressed) to R (relaxed) conformational transition characteristic of active serpins, it exhibits no serine protease inhibitory activity. In Mus musculus (Mouse), this protein is Serpin B5 (Serpinb5).